The primary structure comprises 400 residues: Deoxyguanosinetriphosphate triphosphohydrolase-like protein (400 aa).

The HD domain occupies 73 to 215 (RLTHSIEVSQ…AAIADDIAYN (143 aa)).

It belongs to the dGTPase family. Type 2 subfamily.

The sequence is that of Deoxyguanosinetriphosphate triphosphohydrolase-like protein from Bartonella henselae (strain ATCC 49882 / DSM 28221 / CCUG 30454 / Houston 1) (Rochalimaea henselae).